Here is a 366-residue protein sequence, read N- to C-terminus: Putative F-box protein At3g13624 (366 aa).

The 51-residue stretch at M1–Q51 folds into the F-box domain.

This Arabidopsis thaliana (Mouse-ear cress) protein is Putative F-box protein At3g13624.